Here is a 615-residue protein sequence, read N- to C-terminus: Crinkler effector protein 15 (615 aa).

The signal sequence occupies residues 1–17; it reads MVKLVCAIVGVAGSAFP. An LQLFLAK domain region spans residues 18–54; the sequence is VDIDASQLVGDLKKAIKAENAMTFTGDAKDLQLFLAK. The DWL domain stretch occupies residues 55 to 136; that stretch reads QPVDDESGKE…NMELPSSEQI (82 aa). The HVLVXXP motif signature appears at 137–143; it reads HVLVVVP. Residue Asn-531 is glycosylated (N-linked (GlcNAc...) asparagine).

Belongs to the Crinkler effector family.

The protein resides in the secreted. Its subcellular location is the host nucleus. Functionally, secreted effector that elicits necrosis in host plants, a characteristic of plant innate immunity. This is Crinkler effector protein 15 from Phytophthora infestans (Potato late blight agent).